Here is a 427-residue protein sequence, read N- to C-terminus: MRKEKSLGLAAEMRTLAEASREAARALSHADPRRKDAALRAAAEAIGRREKRILSENARDVAAARAAGQNAAYLDRLKLDPKRLAGIAAALHEIAGLRDPVGEVTASWRRPNGLEIRKVRIPLGVVLMVYEARPNVTVDAAALCLKSGNAAILRPGSDALRSSLALAAAFAEGLEKAGLPAASAQVVPTPDREATYELLALDDLIDLAIPRGGPSLIRAVAERSRVPVLKHYQGVCHLYLDASAPPQQAVDLALNGKVQRPGVCNATECLLVHRGAAGKLLPPVGRALADAGVELRCDPTALTILKRAGVAAVPARPDDFGKEFLDRILAVRVVADLDGALDHIARYGSLHTEAIVTRDLASARRFQREVDASAVMVNASTRFNDGGELGLGAEIGISTTKLHAFGPMGLAELTTQKFLVEGEGHVR.

The protein belongs to the gamma-glutamyl phosphate reductase family.

The protein localises to the cytoplasm. The enzyme catalyses L-glutamate 5-semialdehyde + phosphate + NADP(+) = L-glutamyl 5-phosphate + NADPH + H(+). It functions in the pathway amino-acid biosynthesis; L-proline biosynthesis; L-glutamate 5-semialdehyde from L-glutamate: step 2/2. Its function is as follows. Catalyzes the NADPH-dependent reduction of L-glutamate 5-phosphate into L-glutamate 5-semialdehyde and phosphate. The product spontaneously undergoes cyclization to form 1-pyrroline-5-carboxylate. The polypeptide is Gamma-glutamyl phosphate reductase (Anaeromyxobacter sp. (strain K)).